Here is a 347-residue protein sequence, read N- to C-terminus: NADH-ubiquinone oxidoreductase chain 2 (347 aa).

A run of 10 helical transmembrane segments spans residues 3–23 (PIIL…TMIS), 25–45 (HWLL…PILM), 59–79 (YFLT…INTA), 96–116 (LVTM…FWVP), 127–147 (GMLL…QIFP), 150–170 (NPNI…WGGL), 193–213 (ILMY…MLTI), 240–260 (ITLT…LTGF), 274–294 (SNIM…YFYM), and 323–343 (IFLL…SPAL).

It belongs to the complex I subunit 2 family. As to quaternary structure, core subunit of respiratory chain NADH dehydrogenase (Complex I) which is composed of 45 different subunits. Interacts with TMEM242.

It localises to the mitochondrion inner membrane. It catalyses the reaction a ubiquinone + NADH + 5 H(+)(in) = a ubiquinol + NAD(+) + 4 H(+)(out). Its function is as follows. Core subunit of the mitochondrial membrane respiratory chain NADH dehydrogenase (Complex I) which catalyzes electron transfer from NADH through the respiratory chain, using ubiquinone as an electron acceptor. Essential for the catalytic activity and assembly of complex I. The polypeptide is NADH-ubiquinone oxidoreductase chain 2 (Lemur catta (Ring-tailed lemur)).